Reading from the N-terminus, the 509-residue chain is MDIRAAEISAILKDQIKNFGQEAEVSEVGQVLSVGDGIARVYGLDNVQAGEMVEFPGGIRGMALNLEADNVGVVIFGSDRDIKEGDTVKRTGAIVDVPVGPELLGRVVDALGNPIDGKGPINAKQRARVDVKAPGIIPRKSVHEPMSTGLKAIDALIPVGRGQRELVIGDRQTGKTAIILDTILNQKAIHDNGPEGDKLYCVYVAIGQKRSTVAQFVKVLEERGALQYSIIVAATASDAAPMQYLAPFAGCTMGEYFRDSGKHALIGYDDLSKQAVAYRQMSLLLRRPPGREAYPGDVFYLHSRLLERAAKLNDDNGAGSLTALPVIETQGNDVSAFIPTNVISITDGQIFLETDLFYQGIRPAVNVGLSVSRVGSSAQIKAMKQVAGSIKGELAQYREMAAFAQFGSDLDAATQRLLNRGARLTELLKQPQFSPLKTEEQVAVIFAGVNGFLDKLPVADVGKFEQGLLSYMRSEGKAVLDTIRTEKAISDDTKAKLKAAIDSFAKSFA.

169–176 (GDRQTGKT) contacts ATP.

It belongs to the ATPase alpha/beta chains family. F-type ATPases have 2 components, CF(1) - the catalytic core - and CF(0) - the membrane proton channel. CF(1) has five subunits: alpha(3), beta(3), gamma(1), delta(1), epsilon(1). CF(0) has three main subunits: a(1), b(2) and c(9-12). The alpha and beta chains form an alternating ring which encloses part of the gamma chain. CF(1) is attached to CF(0) by a central stalk formed by the gamma and epsilon chains, while a peripheral stalk is formed by the delta and b chains.

It is found in the cell inner membrane. The enzyme catalyses ATP + H2O + 4 H(+)(in) = ADP + phosphate + 5 H(+)(out). Functionally, produces ATP from ADP in the presence of a proton gradient across the membrane. The alpha chain is a regulatory subunit. This is ATP synthase subunit alpha from Sinorhizobium medicae (strain WSM419) (Ensifer medicae).